The sequence spans 551 residues: Urocanate hydratase (551 aa).

NAD(+)-binding positions include 48–49 (GG), glutamine 126, 172–174 (GMG), glutamate 192, arginine 197, 238–239 (NA), 259–263 (QTSAH), 269–270 (YI), and tyrosine 318. Cysteine 406 is a catalytic residue. Residue glycine 488 coordinates NAD(+).

It belongs to the urocanase family. NAD(+) is required as a cofactor.

It is found in the cytoplasm. The enzyme catalyses 4-imidazolone-5-propanoate = trans-urocanate + H2O. The protein operates within amino-acid degradation; L-histidine degradation into L-glutamate; N-formimidoyl-L-glutamate from L-histidine: step 2/3. In terms of biological role, catalyzes the conversion of urocanate to 4-imidazolone-5-propionate. This chain is Urocanate hydratase, found in Symbiobacterium thermophilum (strain DSM 24528 / JCM 14929 / IAM 14863 / T).